Consider the following 353-residue polypeptide: Photosystem II D2 protein (353 aa).

An N-acetylthreonine modification is found at Thr-2. Thr-2 carries the phosphothreonine modification. Residues 41–61 (CAYFALGGWFTGTTFVTSWYT) traverse the membrane as a helical segment. His-118 provides a ligand contact to chlorophyll a. Residues 125–141 (GFMLRQFELARSVQLRP) traverse the membrane as a helical segment. Residues Gln-130 and Asn-143 each contribute to the pheophytin a site. The helical transmembrane segment at 153 to 166 (VFVSVFLIYPLGQS) threads the bilayer. His-198 contacts chlorophyll a. The helical transmembrane segment at 208–228 (AALLCAIHGATVENTLFEDGD) threads the bilayer. Residues His-215 and Phe-262 each coordinate a plastoquinone. His-215 contributes to the Fe cation binding site. Residue His-269 coordinates Fe cation. A helical transmembrane segment spans residues 279-295 (GLWMSALGVVGLALNLR).

The protein belongs to the reaction center PufL/M/PsbA/D family. As to quaternary structure, PSII is composed of 1 copy each of membrane proteins PsbA, PsbB, PsbC, PsbD, PsbE, PsbF, PsbH, PsbI, PsbJ, PsbK, PsbL, PsbM, PsbT, PsbX, PsbY, PsbZ, Psb30/Ycf12, at least 3 peripheral proteins of the oxygen-evolving complex and a large number of cofactors. It forms dimeric complexes. Interacts with PAM68. It depends on The D1/D2 heterodimer binds P680, chlorophylls that are the primary electron donor of PSII, and subsequent electron acceptors. It shares a non-heme iron and each subunit binds pheophytin, quinone, additional chlorophylls, carotenoids and lipids. There is also a Cl(-1) ion associated with D1 and D2, which is required for oxygen evolution. The PSII complex binds additional chlorophylls, carotenoids and specific lipids. as a cofactor. Phosphorylation occurs in normal plant growth light conditions. Rapid dephosphorylation occurs during heat shock.

It localises to the plastid. The protein resides in the chloroplast thylakoid membrane. The enzyme catalyses 2 a plastoquinone + 4 hnu + 2 H2O = 2 a plastoquinol + O2. In terms of biological role, photosystem II (PSII) is a light-driven water:plastoquinone oxidoreductase that uses light energy to abstract electrons from H(2)O, generating O(2) and a proton gradient subsequently used for ATP formation. It consists of a core antenna complex that captures photons, and an electron transfer chain that converts photonic excitation into a charge separation. The D1/D2 (PsbA/PsbD) reaction center heterodimer binds P680, the primary electron donor of PSII as well as several subsequent electron acceptors. D2 is needed for assembly of a stable PSII complex. This Arabidopsis thaliana (Mouse-ear cress) protein is Photosystem II D2 protein.